Here is a 340-residue protein sequence, read N- to C-terminus: 4-hydroxythreonine-4-phosphate dehydrogenase (340 aa).

Thr-135 provides a ligand contact to substrate. A divalent metal cation-binding residues include His-170, His-215, and His-276. Lys-284, Asn-293, and Arg-302 together coordinate substrate.

This sequence belongs to the PdxA family. In terms of assembly, homodimer. A divalent metal cation serves as cofactor.

It is found in the cytoplasm. The catalysed reaction is 4-(phosphooxy)-L-threonine + NAD(+) = 3-amino-2-oxopropyl phosphate + CO2 + NADH. The protein operates within cofactor biosynthesis; pyridoxine 5'-phosphate biosynthesis; pyridoxine 5'-phosphate from D-erythrose 4-phosphate: step 4/5. Its function is as follows. Catalyzes the NAD(P)-dependent oxidation of 4-(phosphooxy)-L-threonine (HTP) into 2-amino-3-oxo-4-(phosphooxy)butyric acid which spontaneously decarboxylates to form 3-amino-2-oxopropyl phosphate (AHAP). The protein is 4-hydroxythreonine-4-phosphate dehydrogenase of Synechococcus sp. (strain JA-2-3B'a(2-13)) (Cyanobacteria bacterium Yellowstone B-Prime).